The chain runs to 256 residues: MLRIADKTFDSHLFTGTGKFASSQLMVEAIRASGSQLVTLAMKRVDLRQHNDAILAPLIEAGVTLLPNTSGAKTAEEAIFAAQLAREALGTHWLKLEIHPDARWLLPDPIETLKAAEALVKQGFVVLPYCGADPVLCKRLEEVGCAAVMPLGAPIGSNQGLETKAMLEIIIQQATVPVVVDAGIGVPSHATQALEMGADAVLVNTAIAVADNPVMMATAFRLAVEAGLLARQAVPGNRSTYASATSPLTGFLEALA.

The Schiff-base intermediate with DXP role is filled by lysine 95. 1-deoxy-D-xylulose 5-phosphate-binding positions include glycine 156, 182-183 (AG), and 204-205 (NT).

Belongs to the ThiG family. In terms of assembly, homotetramer. Forms heterodimers with either ThiH or ThiS.

It localises to the cytoplasm. It catalyses the reaction [ThiS sulfur-carrier protein]-C-terminal-Gly-aminoethanethioate + 2-iminoacetate + 1-deoxy-D-xylulose 5-phosphate = [ThiS sulfur-carrier protein]-C-terminal Gly-Gly + 2-[(2R,5Z)-2-carboxy-4-methylthiazol-5(2H)-ylidene]ethyl phosphate + 2 H2O + H(+). The protein operates within cofactor biosynthesis; thiamine diphosphate biosynthesis. Catalyzes the rearrangement of 1-deoxy-D-xylulose 5-phosphate (DXP) to produce the thiazole phosphate moiety of thiamine. Sulfur is provided by the thiocarboxylate moiety of the carrier protein ThiS. In vitro, sulfur can be provided by H(2)S. The protein is Thiazole synthase of Salmonella paratyphi A (strain ATCC 9150 / SARB42).